The primary structure comprises 251 residues: GTP cyclohydrolase 1 type 2 homolog (251 aa).

5 residues coordinate a divalent metal cation: H63, H64, D101, H219, and E223.

Belongs to the GTP cyclohydrolase I type 2/NIF3 family. As to quaternary structure, toroid-shaped homohexamer. In the hexamer, 3 dimers assemble to form a ring-like structure surrounding a central hole.

In Haemophilus influenzae (strain ATCC 51907 / DSM 11121 / KW20 / Rd), this protein is GTP cyclohydrolase 1 type 2 homolog.